Consider the following 688-residue polypeptide: Bifunctional protein GAL10 (688 aa).

The tract at residues 1-346 (MSEDKYCLVT…TQDNPFGYQI (346 aa)) is galactowaldenase. 6 to 37 (YCLVTGGAGYIGSHTVVELCEAGYKCIVVDNL) provides a ligand contact to NAD(+). The interval 347–688 (KGVDSKFFGD…HKLSYTFRTL (342 aa)) is mutarotase. Residue H525 is the For mutarotase activity of the active site.

It in the N-terminal section; belongs to the NAD(P)-dependent epimerase/dehydratase family. In the C-terminal section; belongs to the aldose epimerase family. NAD(+) is required as a cofactor.

The catalysed reaction is UDP-alpha-D-glucose = UDP-alpha-D-galactose. The enzyme catalyses alpha-D-glucose = beta-D-glucose. The protein operates within carbohydrate metabolism; galactose metabolism. It participates in carbohydrate metabolism; hexose metabolism. Its function is as follows. Mutarotase converts alpha-aldose to the beta-anomer. It is active on D-glucose, L-arabinose, D-xylose, D-galactose, maltose and lactose. The polypeptide is Bifunctional protein GAL10 (GAL10) (Kluyveromyces lactis (strain ATCC 8585 / CBS 2359 / DSM 70799 / NBRC 1267 / NRRL Y-1140 / WM37) (Yeast)).